The following is a 510-amino-acid chain: 2,3-bisphosphoglycerate-independent phosphoglycerate mutase (510 aa).

Positions 13 and 63 each coordinate Mn(2+). The active-site Phosphoserine intermediate is serine 63. Substrate is bound by residues histidine 124, arginine 154 to aspartate 155, arginine 186, arginine 192, arginine 262 to arginine 265, and lysine 334. Mn(2+)-binding residues include aspartate 401, histidine 405, aspartate 442, histidine 443, and histidine 461.

The protein belongs to the BPG-independent phosphoglycerate mutase family. In terms of assembly, monomer. The cofactor is Mn(2+).

The catalysed reaction is (2R)-2-phosphoglycerate = (2R)-3-phosphoglycerate. It functions in the pathway carbohydrate degradation; glycolysis; pyruvate from D-glyceraldehyde 3-phosphate: step 3/5. Its function is as follows. Catalyzes the interconversion of 2-phosphoglycerate and 3-phosphoglycerate. The chain is 2,3-bisphosphoglycerate-independent phosphoglycerate mutase from Vibrio atlanticus (strain LGP32) (Vibrio splendidus (strain Mel32)).